A 136-amino-acid polypeptide reads, in one-letter code: Histone H2A (136 aa).

A compositionally biased stretch (gly residues) spans 1 to 11 (MSSGGKSGGKA). A disordered region spans residues 1 to 24 (MSSGGKSGGKAGDASSKAQSRSAK). N6-acetyllysine occurs at positions 6 and 10. The segment covering 12 to 24 (GDASSKAQSRSAK) has biased composition (low complexity). Gln108 bears the N5-methylglutamine mark. The residue at position 133 (Ser133) is a Phosphoserine. The short motif at 133–134 (SQ) is the [ST]-Q motif element.

This sequence belongs to the histone H2A family. As to quaternary structure, the nucleosome is a histone octamer containing two molecules each of H2A, H2B, H3 and H4 assembled in one H3-H4 heterotetramer and two H2A-H2B heterodimers. The octamer wraps approximately 147 bp of DNA. Phosphorylated to form H2AS128ph (gamma-H2A) in response to DNA double-strand breaks (DSBs) generated by exogenous genotoxic agents and by stalled replication forks. Phosphorylation is dependent on the DNA damage checkpoint kinases MEC1/ATR and TEL1/ATM, spreads on either side of a detected DSB site and may mark the surrounding chromatin for recruitment of proteins required for DNA damage signaling and repair. Gamma-H2A is removed from the DNA prior to the strand invasion-primer extension step of the repair process and subsequently dephosphorylated. Dephosphorylation is necessary for efficient recovery from the DNA damage checkpoint. Post-translationally, acetylated by ESA1 to form H2AK4ac and H2AK7ac.

The protein localises to the nucleus. Its subcellular location is the chromosome. Functionally, core component of nucleosome which plays a central role in DNA double strand break (DSB) repair. Nucleosomes wrap and compact DNA into chromatin, limiting DNA accessibility to the cellular machineries which require DNA as a template. Histones thereby play a central role in transcription regulation, DNA repair, DNA replication and chromosomal stability. DNA accessibility is regulated via a complex set of post-translational modifications of histones, also called histone code, and nucleosome remodeling. The polypeptide is Histone H2A (HTA1) (Mycosarcoma maydis (Corn smut fungus)).